A 668-amino-acid polypeptide reads, in one-letter code: UvrABC system protein B (668 aa).

One can recognise a Helicase ATP-binding domain in the interval 36 to 423; that stretch reads DNIKGGEKAQ…TETVVEQIIR (388 aa). 49 to 56 contributes to the ATP binding site; sequence GATGTGKT. The Beta-hairpin signature appears at 102–125; the sequence is YYDYYQPEAYVPSSDTYIEKDSSI. The region spanning 440-606 is the Helicase C-terminal domain; sequence QMDDLLGEIN…TIKKEIRDLI (167 aa). A UVR domain is found at 632 to 667; the sequence is QEAIKKLQKQMHEAAELLDFELAAQIRDMVLELKSM.

It belongs to the UvrB family. In terms of assembly, forms a heterotetramer with UvrA during the search for lesions. Interacts with UvrC in an incision complex.

It localises to the cytoplasm. The UvrABC repair system catalyzes the recognition and processing of DNA lesions. A damage recognition complex composed of 2 UvrA and 2 UvrB subunits scans DNA for abnormalities. Upon binding of the UvrA(2)B(2) complex to a putative damaged site, the DNA wraps around one UvrB monomer. DNA wrap is dependent on ATP binding by UvrB and probably causes local melting of the DNA helix, facilitating insertion of UvrB beta-hairpin between the DNA strands. Then UvrB probes one DNA strand for the presence of a lesion. If a lesion is found the UvrA subunits dissociate and the UvrB-DNA preincision complex is formed. This complex is subsequently bound by UvrC and the second UvrB is released. If no lesion is found, the DNA wraps around the other UvrB subunit that will check the other stand for damage. The protein is UvrABC system protein B of Streptococcus thermophilus (strain CNRZ 1066).